A 295-amino-acid chain; its full sequence is MPKPALRRVMTATVAAVGTLALGLTDATAHAAPAQATPTLDYVALGDSYSAGSGVLPVDPANLLCLRSTANYPHVIADTTGARLTDVTCGAAQTADFTRAQYPGVAPQLDALGTGTDLVTLTIGGNDNSTFINAITACGTAGVLSGGKGSPCKDRHGTSFDDEIEANTYPALKEALLGVRARAPHARVAALGYPWITPATADPSCFLKLPLAAGDVPYLRAIQAHLNDAVRRAAEETGATYVDFSGVSDGHDACEAPGTRWIEPLLFGHSLVPVHPNALGERRMAEHTMDVLGLD.

An N-terminal signal peptide occupies residues 1–31 (MPKPALRRVMTATVAAVGTLALGLTDATAHA). Ser48 (nucleophile) is an active-site residue. Cystine bridges form between Cys65–Cys89, Cys138–Cys152, and Cys205–Cys254. The active site involves His275.

The protein belongs to the 'GDSL' lipolytic enzyme family. As to quaternary structure, monomer.

The protein resides in the secreted. It carries out the reaction a triacylglycerol + H2O = a diacylglycerol + a fatty acid + H(+). Its activity is regulated as follows. Strongly inhibited by Ag(+). The cations Ca(2+) and Mg(2+) do not significantly reduce the lipolytic activity of SCO7513, whereas high concentrations of Co(2+) and Cu(2+) partially inhibit it. Is not inhibited by DTT in vitro. Is resistant to PMSF inhibition, except in the presence of Ca(2+). Its function is as follows. Catalyzes the hydrolysis of fatty acid esters with a preference for long chain fatty acids (C16-C18). The chain is Lipase 2 from Streptomyces coelicolor (strain ATCC BAA-471 / A3(2) / M145).